The following is a 267-amino-acid chain: Imidazole glycerol phosphate synthase subunit HisF (267 aa).

Catalysis depends on residues Asp22 and Asp141.

This sequence belongs to the HisA/HisF family. In terms of assembly, heterodimer of HisH and HisF.

It is found in the cytoplasm. It carries out the reaction 5-[(5-phospho-1-deoxy-D-ribulos-1-ylimino)methylamino]-1-(5-phospho-beta-D-ribosyl)imidazole-4-carboxamide + L-glutamine = D-erythro-1-(imidazol-4-yl)glycerol 3-phosphate + 5-amino-1-(5-phospho-beta-D-ribosyl)imidazole-4-carboxamide + L-glutamate + H(+). Its pathway is amino-acid biosynthesis; L-histidine biosynthesis; L-histidine from 5-phospho-alpha-D-ribose 1-diphosphate: step 5/9. In terms of biological role, IGPS catalyzes the conversion of PRFAR and glutamine to IGP, AICAR and glutamate. The HisF subunit catalyzes the cyclization activity that produces IGP and AICAR from PRFAR using the ammonia provided by the HisH subunit. The polypeptide is Imidazole glycerol phosphate synthase subunit HisF (Mycobacterium tuberculosis (strain ATCC 25177 / H37Ra)).